The following is a 99-amino-acid chain: Aspartyl/glutamyl-tRNA(Asn/Gln) amidotransferase subunit C (99 aa).

This sequence belongs to the GatC family. As to quaternary structure, heterotrimer of A, B and C subunits.

It catalyses the reaction L-glutamyl-tRNA(Gln) + L-glutamine + ATP + H2O = L-glutaminyl-tRNA(Gln) + L-glutamate + ADP + phosphate + H(+). The catalysed reaction is L-aspartyl-tRNA(Asn) + L-glutamine + ATP + H2O = L-asparaginyl-tRNA(Asn) + L-glutamate + ADP + phosphate + 2 H(+). Its function is as follows. Allows the formation of correctly charged Asn-tRNA(Asn) or Gln-tRNA(Gln) through the transamidation of misacylated Asp-tRNA(Asn) or Glu-tRNA(Gln) in organisms which lack either or both of asparaginyl-tRNA or glutaminyl-tRNA synthetases. The reaction takes place in the presence of glutamine and ATP through an activated phospho-Asp-tRNA(Asn) or phospho-Glu-tRNA(Gln). This chain is Aspartyl/glutamyl-tRNA(Asn/Gln) amidotransferase subunit C, found in Cupriavidus taiwanensis (strain DSM 17343 / BCRC 17206 / CCUG 44338 / CIP 107171 / LMG 19424 / R1) (Ralstonia taiwanensis (strain LMG 19424)).